The sequence spans 264 residues: Small ribosomal subunit protein eS1 (264 aa).

The segment at 233–264 (GEGGGAGKPSGDEAGAKVERADGYEPPVQESV) is disordered. A compositionally biased stretch (basic and acidic residues) spans 242–255 (SGDEAGAKVERADG).

Belongs to the eukaryotic ribosomal protein eS1 family. Component of the small ribosomal subunit. Mature ribosomes consist of a small (40S) and a large (60S) subunit. The 40S subunit contains about 33 different proteins and 1 molecule of RNA (18S). The 60S subunit contains about 49 different proteins and 3 molecules of RNA (25S, 5.8S and 5S).

The protein localises to the cytoplasm. The polypeptide is Small ribosomal subunit protein eS1 (Eimeria tenella (Coccidian parasite)).